Consider the following 1236-residue polypeptide: ATP-dependent helicase/nuclease subunit A (1236 aa).

A UvrD-like helicase ATP-binding domain is found at 2–457; the sequence is AHWTIEQEEA…VDLNKNFRSH (456 aa). 23 to 30 contributes to the ATP binding site; that stretch reads AAAGSGKT. The UvrD-like helicase C-terminal domain maps to 515–816; the sequence is NTAKRVEICI…RIMSIHKSKG (302 aa).

Belongs to the helicase family. AddA subfamily. In terms of assembly, heterodimer of AddA and AddB/RexB. Mg(2+) is required as a cofactor.

It catalyses the reaction Couples ATP hydrolysis with the unwinding of duplex DNA by translocating in the 3'-5' direction.. It carries out the reaction ATP + H2O = ADP + phosphate + H(+). Its function is as follows. The heterodimer acts as both an ATP-dependent DNA helicase and an ATP-dependent, dual-direction single-stranded exonuclease. Recognizes the chi site generating a DNA molecule suitable for the initiation of homologous recombination. The AddA nuclease domain is required for chi fragment generation; this subunit has the helicase and 3' -&gt; 5' nuclease activities. The chain is ATP-dependent helicase/nuclease subunit A from Syntrophomonas wolfei subsp. wolfei (strain DSM 2245B / Goettingen).